The sequence spans 104 residues: MYAIIETGGKQYMVREGDVLKVEKLNYPEGEVIALDKVLAVSFEDGNVEFGKPYLENVKVTAKVLEHGKGPKIRVFKYKPKKNYRRRQGHRQPYTKIQIEKIEK.

Belongs to the bacterial ribosomal protein bL21 family. In terms of assembly, part of the 50S ribosomal subunit. Contacts protein L20.

In terms of biological role, this protein binds to 23S rRNA in the presence of protein L20. The sequence is that of Large ribosomal subunit protein bL21 from Caldanaerobacter subterraneus subsp. tengcongensis (strain DSM 15242 / JCM 11007 / NBRC 100824 / MB4) (Thermoanaerobacter tengcongensis).